Here is a 488-residue protein sequence, read N- to C-terminus: Glutamyl-tRNA(Gln) amidotransferase subunit A (488 aa).

Catalysis depends on charge relay system residues K77 and S152. The active-site Acyl-ester intermediate is S176.

The protein belongs to the amidase family. GatA subfamily. As to quaternary structure, heterotrimer of A, B and C subunits.

It carries out the reaction L-glutamyl-tRNA(Gln) + L-glutamine + ATP + H2O = L-glutaminyl-tRNA(Gln) + L-glutamate + ADP + phosphate + H(+). In terms of biological role, allows the formation of correctly charged Gln-tRNA(Gln) through the transamidation of misacylated Glu-tRNA(Gln) in organisms which lack glutaminyl-tRNA synthetase. The reaction takes place in the presence of glutamine and ATP through an activated gamma-phospho-Glu-tRNA(Gln). The polypeptide is Glutamyl-tRNA(Gln) amidotransferase subunit A (Streptococcus pyogenes serotype M1).